The sequence spans 1343 residues: DNA-directed RNA polymerase subunit beta (1343 aa).

It belongs to the RNA polymerase beta chain family. As to quaternary structure, the RNAP catalytic core consists of 2 alpha, 1 beta, 1 beta' and 1 omega subunit. When a sigma factor is associated with the core the holoenzyme is formed, which can initiate transcription.

The enzyme catalyses RNA(n) + a ribonucleoside 5'-triphosphate = RNA(n+1) + diphosphate. DNA-dependent RNA polymerase catalyzes the transcription of DNA into RNA using the four ribonucleoside triphosphates as substrates. The protein is DNA-directed RNA polymerase subunit beta of Haemophilus influenzae (strain PittGG).